The primary structure comprises 177 residues: Large ribosomal subunit protein uL10 (177 aa).

Belongs to the universal ribosomal protein uL10 family. In terms of assembly, part of the ribosomal stalk of the 50S ribosomal subunit. The N-terminus interacts with L11 and the large rRNA to form the base of the stalk. The C-terminus forms an elongated spine to which L12 dimers bind in a sequential fashion forming a multimeric L10(L12)X complex.

In terms of biological role, forms part of the ribosomal stalk, playing a central role in the interaction of the ribosome with GTP-bound translation factors. The protein is Large ribosomal subunit protein uL10 of Leptospira borgpetersenii serovar Hardjo-bovis (strain JB197).